Here is a 178-residue protein sequence, read N- to C-terminus: MSGGKYVDAEGLLYSVPSRDQGNIYKPHNKTMADDLPEKQLYDAHTKEIDLVNRDPKHLNDDVVKIDFEDVIAEPEGTHSFDGIWKASFTTFTVTKYWFYRLLSALLGIPLALLWGIYFAILSFLHIWAVVPCIRSYLIEIQCISRVYSICIHTFCDPLFEAIGKVFSNIRATVQKEI.

Serine 2 bears the N-acetylserine mark. Position 2 is a phosphoserine (serine 2). The tract at residues serine 2–valine 94 is required for homooligomerization. The Cytoplasmic portion of the chain corresponds to serine 2–serine 104. Lysine 5 is subject to N6-acetyllysine; alternate. Lysine 5 is covalently cross-linked (Glycyl lysine isopeptide (Lys-Gly) (interchain with G-Cter in ubiquitin); alternate). A Phosphotyrosine modification is found at tyrosine 6. A Phosphotyrosine; by ABL1 modification is found at tyrosine 14. Tyrosine 25 bears the Phosphotyrosine mark. Residues lysine 26, lysine 30, lysine 39, lysine 47, and lysine 57 each participate in a glycyl lysine isopeptide (Lys-Gly) (interchain with G-Cter in ubiquitin) cross-link. Positions aspartate 82–valine 94 are interaction with CAVIN3. Positions alanine 105–leucine 125 form an intramembrane region, helical. Residues histidine 126–isoleucine 178 are Cytoplasmic-facing. An interacts with SPRY1, SPRY2, SPRY3 and SPRY4 region spans residues valine 131–glutamine 142. Residues cysteine 133, cysteine 143, and cysteine 156 are each lipidated (S-palmitoyl cysteine). The segment at serine 149–phenylalanine 160 is interacts with SPRY1, SPRY2, and SPRY4. The tract at residues phenylalanine 167–isoleucine 178 is interacts with SPRY1, SPRY2, SPRY3 and SPRY4.

This sequence belongs to the caveolin family. Homooligomer. Interacts with GLIPR2. Interacts with NOSTRIN. Interacts with SNAP25 and STX1A. Interacts (via the N-terminus) with DPP4; the interaction is direct. Interacts with CTNNB1, CDH1 and JUP. Interacts with PACSIN2; this interaction induces membrane tubulation. Interacts with SLC7A9. Interacts with BMX and BTK. Interacts with TGFBR1. Interacts with CAVIN3 (via leucine-zipper domain) in a cholesterol-sensitive manner. Interacts with CAVIN1. Interacts with EHD2 in a cholesterol-dependent manner. Forms a ternary complex with UBXN6 and VCP; mediates CAV1 targeting to lysosomes for degradation. Interacts with ABCG1; this interaction regulates ABCG1-mediated cholesterol efflux. Interacts with NEU3; this interaction enhances NEU3 sialidase activity within caveola. Interacts (via C-terminus) with SPRY1, SPRY2 (via C-terminus), SPRY3, and SPRY4. Interacts with IGFBP5; this interaction allows trafficking of IGFBP5 from the plasma membrane to the nucleus. Post-translationally, phosphorylated at Tyr-14 by ABL1 in response to oxidative stress. Ubiquitinated. Undergo monoubiquitination and multi- and/or polyubiquitination. Monoubiquitination of N-terminal lysines promotes integration in a ternary complex with UBXN6 and VCP which promotes oligomeric CAV1 targeting to lysosomes for degradation. Ubiquitinated by ZNRF1; leading to degradation and modulation of the TLR4-mediated immune response.

It is found in the golgi apparatus membrane. The protein localises to the cell membrane. The protein resides in the membrane. Its subcellular location is the caveola. It localises to the membrane raft. May act as a scaffolding protein within caveolar membranes. Forms a stable heterooligomeric complex with CAV2 that targets to lipid rafts and drives caveolae formation. Mediates the recruitment of CAVIN proteins (CAVIN1/2/3/4) to the caveolae. Interacts directly with G-protein alpha subunits and can functionally regulate their activity. Involved in the costimulatory signal essential for T-cell receptor (TCR)-mediated T-cell activation. Its binding to DPP4 induces T-cell proliferation and NF-kappa-B activation in a T-cell receptor/CD3-dependent manner. Recruits CTNNB1 to caveolar membranes and may regulate CTNNB1-mediated signaling through the Wnt pathway. Negatively regulates TGFB1-mediated activation of SMAD2/3 by mediating the internalization of TGFBR1 from membrane rafts leading to its subsequent degradation. Binds 20(S)-hydroxycholesterol (20(S)-OHC). This chain is Caveolin-1 (CAV1), found in Ornithorhynchus anatinus (Duckbill platypus).